We begin with the raw amino-acid sequence, 483 residues long: NADPH:adrenodoxin oxidoreductase, mitochondrial (483 aa).

Residues 1-14 (MSRYLARYMVSRYF) constitute a mitochondrion transit peptide. 4 residues coordinate FAD: Ala-32, Asp-53, Leu-61, and Leu-97. NADP(+) is bound by residues 169–172 (QGNV), 213–214 (RR), and Glu-225. FAD is bound by residues Trp-391 and 398-400 (GII). Gly-398 serves as a coordination point for NADP(+).

It belongs to the ferredoxin--NADP reductase type 1 family. Requires FAD as cofactor.

The protein localises to the mitochondrion. It carries out the reaction 2 reduced [adrenodoxin] + NADP(+) + H(+) = 2 oxidized [adrenodoxin] + NADPH. Functionally, associates in vitro with the adrenodoxin-like protein MFDX1 to form an efficient low potential electron transfer chain that is able to reduce cytochrome C. Functions as accessory mitochondrial protein involved with BIO2 in the plant biotin synthase reaction. This chain is NADPH:adrenodoxin oxidoreductase, mitochondrial, found in Arabidopsis thaliana (Mouse-ear cress).